An 806-amino-acid chain; its full sequence is Glycerol-3-phosphate acyltransferase (806 aa).

Positions 305–310 (CHRSHM) match the HXXXXD motif motif.

Belongs to the GPAT/DAPAT family.

It is found in the cell inner membrane. It catalyses the reaction sn-glycerol 3-phosphate + an acyl-CoA = a 1-acyl-sn-glycero-3-phosphate + CoA. It participates in phospholipid metabolism; CDP-diacylglycerol biosynthesis; CDP-diacylglycerol from sn-glycerol 3-phosphate: step 1/3. This Escherichia fergusonii (strain ATCC 35469 / DSM 13698 / CCUG 18766 / IAM 14443 / JCM 21226 / LMG 7866 / NBRC 102419 / NCTC 12128 / CDC 0568-73) protein is Glycerol-3-phosphate acyltransferase.